Reading from the N-terminus, the 129-residue chain is Phosphoribosyl-AMP cyclohydrolase (129 aa).

Asp85 contributes to the Mg(2+) binding site. Cys86 contacts Zn(2+). Asp87 and Asp89 together coordinate Mg(2+). 2 residues coordinate Zn(2+): Cys102 and Cys109.

Belongs to the PRA-CH family. As to quaternary structure, homodimer. It depends on Mg(2+) as a cofactor. Zn(2+) serves as cofactor.

The protein resides in the cytoplasm. It catalyses the reaction 1-(5-phospho-beta-D-ribosyl)-5'-AMP + H2O = 1-(5-phospho-beta-D-ribosyl)-5-[(5-phospho-beta-D-ribosylamino)methylideneamino]imidazole-4-carboxamide. The protein operates within amino-acid biosynthesis; L-histidine biosynthesis; L-histidine from 5-phospho-alpha-D-ribose 1-diphosphate: step 3/9. Its function is as follows. Catalyzes the hydrolysis of the adenine ring of phosphoribosyl-AMP. The chain is Phosphoribosyl-AMP cyclohydrolase from Methanococcus maripaludis (strain C6 / ATCC BAA-1332).